The sequence spans 290 residues: ATP synthase gamma chain (290 aa).

The protein belongs to the ATPase gamma chain family. F-type ATPases have 2 components, CF(1) - the catalytic core - and CF(0) - the membrane proton channel. CF(1) has five subunits: alpha(3), beta(3), gamma(1), delta(1), epsilon(1). CF(0) has three main subunits: a, b and c.

The protein resides in the cell inner membrane. In terms of biological role, produces ATP from ADP in the presence of a proton gradient across the membrane. The gamma chain is believed to be important in regulating ATPase activity and the flow of protons through the CF(0) complex. The polypeptide is ATP synthase gamma chain (Erythrobacter litoralis (strain HTCC2594)).